The following is a 264-amino-acid chain: Zinc import ATP-binding protein ZnuC (264 aa).

The ABC transporter domain maps to 20-235 (VQLKNIEVTF…PNFIHFFGDQ (216 aa)). 52-59 (GPNGGGKS) contacts ATP.

The protein belongs to the ABC transporter superfamily. Zinc importer (TC 3.A.1.15.5) family. As to quaternary structure, the complex is composed of two ATP-binding proteins (ZnuC), two transmembrane proteins (ZnuB) and a solute-binding protein (ZnuA).

Its subcellular location is the cell inner membrane. The catalysed reaction is Zn(2+)(out) + ATP(in) + H2O(in) = Zn(2+)(in) + ADP(in) + phosphate(in) + H(+)(in). Functionally, part of the ABC transporter complex ZnuABC involved in zinc import. Responsible for energy coupling to the transport system. This is Zinc import ATP-binding protein ZnuC from Haemophilus ducreyi (strain 35000HP / ATCC 700724).